The sequence spans 604 residues: MSANSPTGNDPHVFGIPVNATPSNMGSPGSPVNVPPPMNPAVANVNHPVMRTNSNSNANEGTRTLTREQIQQLQQRQRLLLQQRLLEQQRKQQALQNYEAQFYQMLMTLNKRPKRLYNFVEDADSILKKYEQYLHSFEFHIYENNYKICAPANSRLQQQQKQPELTSDGLILTKNNETLKEFLEYVARGRIPDAIMEVLRDCNIQFYEGNLILQVYDHTNTVDVTPKENKPNLNSSSSPSNNNSTQDNSKIQQPSEPNSGVANTGANTANKKASFKRPRVYRTLLKPNDLTTYYDMMSYADNARFSDSIYQQFESEILTLTKRNLSLSVPLNPYEHRDMLEETAFSEPHWDSEKKSFIHEHRAESTREGTKGVVGHIEERDEFPQHSSNYEQLMLIMNERTTTITNSTFAVSLTKNAMEIASSSSNGVRGASSSTSNSASNTRNNSLANGNQVALAAAAAAAAVGSTMGNDNNQFSRLKFIEQWRINKEKRKQQALSANINPTPFNARISMTAPLTPQQQLLQRQQQALEQQQNGGAMKNANKRSGNNATSNNNNNNNNLDKPKVKRPRKNAKKSESGTPAPKKKRMTKKKQSASSTPSSTTMS.

3 disordered regions span residues 1-33 (MSANSPTGNDPHVFGIPVNATPSNMGSPGSPVN), 223-273 (DVTP…NKKA), and 422-446 (SSSSNGVRGASSSTSNSASNTRNNS). Low complexity-rich tracts occupy residues 231–249 (PNLNSSSSPSNNNSTQDNS) and 258–272 (NSGVANTGANTANKK). Phosphoserine is present on serine 446. Threonine 516 is modified (phosphothreonine). Low complexity-rich tracts occupy residues 519-533 (QQLLQRQQQALEQQQ) and 547-559 (NNATSNNNNNNNN). The disordered stretch occupies residues 519–604 (QQLLQRQQQA…SSTPSSTTMS (86 aa)). The span at 582 to 592 (PKKKRMTKKKQ) shows a compositional bias: basic residues. Residues 593–604 (SASSTPSSTTMS) show a composition bias toward low complexity.

Belongs to the SPT20 family. Component of the 1.8 MDa SAGA (Spt-Ada-Gcn5 acetyltransferase) complex, which is composed of 19 subunits TRA1, SPT7, TAF5, NGG1/ADA3, SGF73, SPT20/ADA5, SPT8, TAF12, TAF6, HFI1/ADA1, UBP8, GCN5, ADA2, SPT3, SGF29, TAF10, TAF9, SGF11 and SUS1. The SAGA complex is composed of 4 modules, namely the HAT (histone acetyltransferase) module (GCN5, ADA2, NGG1/ADA3 and SGF29), the DUB (deubiquitinating) module (UBP8, SGF11, SGF73 and SUS1), the core or TAF (TBP-associated factor) module (TAF5, TAF6, TAF9, TAF10 and TAF12), and the Tra1 or SPT (Suppressor of Ty) module (TRA1, HFI1/ADA1, SPT3, SPT7, SPT8 and SPT20/ADA5). The Tra1/SPT module binds activators, the core module recruits TBP (TATA-binding protein), the HAT module contains the histone H3 acetyltransferase GCN5, and the DUB module comprises the histone H2B deubiquitinase UBP8. Also identified in an altered form of SAGA, named SALSA (SAGA altered, Spt8 absent) or SLIK (SAGA-like) complex, which contains a C-terminal truncated form of SPT7 and is missing SPT8. However, it has been shown that the SAGA and SAGA-like SALSA/SLIK transcriptional coactivators are structurally and biochemically equivalent. Component of an ADA/GCN5 complex that consists of HFI1/ADA1, ADA2, NGG1/ADA3, SPT20/ADA5 and GCN5 and probably is a subcomplex of SAGA.

It is found in the nucleus. Its function is as follows. Component of the transcription coactivator SAGA complex. SAGA acts as a general cofactor required for essentially all RNA polymerase II transcription. At the promoters, SAGA is required for transcription pre-initiation complex (PIC) recruitment. It influences RNA polymerase II transcriptional activity through different activities such as TBP interaction (via core/TAF module) and promoter selectivity, interaction with transcription activators (via Tra1/SPT module), and chromatin modification through histone acetylation (via HAT module) and deubiquitination (via DUB module). SAGA preferentially acetylates histones H3 (to form H3K9ac, H3K14ac, H3K18ac and H3K23ac) and H2B and deubiquitinates histone H2B. SAGA interacts with DNA via upstream activating sequences (UASs). Also identified in a modified version of SAGA named SALSA or SLIK. The cleavage of SPT7 and the absence of the SPT8 subunit in SLIK neither drive any major conformational differences in its structure compared with SAGA, nor significantly affect HAT, DUB, or DNA-binding activities. Involved in RNA processing, required for the IRE1/RLG1-dependent splicing reaction of HAC1 mRNA. The sequence is that of SAGA complex subunit SPT20 (SPT20) from Saccharomyces cerevisiae (strain ATCC 204508 / S288c) (Baker's yeast).